A 448-amino-acid chain; its full sequence is Chaperone SurA (448 aa).

An N-terminal signal peptide occupies residues 1–27 (MKKTLRFAAVASGLVASLITVAPSASA). PpiC domains lie at 185-288 (QQDL…RLVE) and 301-399 (IVQT…QVLG).

It localises to the periplasm. The catalysed reaction is [protein]-peptidylproline (omega=180) = [protein]-peptidylproline (omega=0). In terms of biological role, chaperone involved in the correct folding and assembly of outer membrane proteins. Recognizes specific patterns of aromatic residues and the orientation of their side chains, which are found more frequently in integral outer membrane proteins. May act in both early periplasmic and late outer membrane-associated steps of protein maturation. The polypeptide is Chaperone SurA (Burkholderia mallei (strain ATCC 23344)).